A 366-amino-acid chain; its full sequence is Neutral protease 2 homolog BDBG_02110 (366 aa).

An N-terminal signal peptide occupies residues 1–19; sequence MQLSSVLLTAAGLLAPVYS. The propeptide occupies 23-184; it reads ISIGRRSEGL…RAKIHDHLAQ (162 aa). 2 N-linked (GlcNAc...) asparagine glycosylation sites follow: Asn123 and Asn192. A disulfide bridge connects residues Cys272 and Cys290. Residue His314 participates in Zn(2+) binding. The active site involves Glu315. His318 provides a ligand contact to Zn(2+).

The protein belongs to the peptidase M35 family. It depends on Zn(2+) as a cofactor.

It localises to the secreted. It carries out the reaction Preferential cleavage of bonds with hydrophobic residues in P1'. Also 3-Asn-|-Gln-4 and 8-Gly-|-Ser-9 bonds in insulin B chain.. Its function is as follows. Secreted metalloproteinase that allows assimilation of proteinaceous substrates. Shows high activities on basic nuclear substrates such as histone and protamine. In Blastomyces gilchristii (strain SLH14081) (Blastomyces dermatitidis), this protein is Neutral protease 2 homolog BDBG_02110.